A 145-amino-acid polypeptide reads, in one-letter code: CASP-like protein SELMODRAFT_406854 (145 aa).

Residues 1-31 lie on the Cytoplasmic side of the membrane; the sequence is MGVASQSSVANEAGAAPEASIQQTLRGFSSP. The chain crosses the membrane as a helical span at residues 32-52; the sequence is TSLLLRIATAVLCTLTLAFLV. The Extracellular portion of the chain corresponds to 53-75; that stretch reads TSKERKEIASIDIVAIWSNSKAL. The helical transmembrane segment at 76-96 threads the bilayer; sequence IFLAVVSGICLGYSLLHAAVF. Residues 97–112 lie on the Cytoplasmic side of the membrane; the sequence is LVMLSGNRKPLARKKA. Residues 113 to 133 traverse the membrane as a helical segment; that stretch reads LDWMVFLADQVFFKIFCWFSI. Residues 134–145 lie on the Extracellular side of the membrane; the sequence is RVSSRRSKAGFV.

The protein belongs to the Casparian strip membrane proteins (CASP) family. In terms of assembly, homodimer and heterodimers.

It localises to the cell membrane. The polypeptide is CASP-like protein SELMODRAFT_406854 (Selaginella moellendorffii (Spikemoss)).